Consider the following 147-residue polypeptide: Ubiquitin-conjugating enzyme E2 D1 (147 aa).

A UBC core domain is found at 1-147 (MALKRIQKEL…AREWTQKYAM (147 aa)). Cys85 (glycyl thioester intermediate) is an active-site residue.

The protein belongs to the ubiquitin-conjugating enzyme family. As to quaternary structure, component of a E3 ubiquitin ligase complex containing UBE2D1, SIAH1, CACYBP/SIP, SKP1, APC and TBL1X. Interacts with RNF11. Post-translationally, autoubiquitinated.

Its subcellular location is the cytoplasm. It carries out the reaction S-ubiquitinyl-[E1 ubiquitin-activating enzyme]-L-cysteine + [E2 ubiquitin-conjugating enzyme]-L-cysteine = [E1 ubiquitin-activating enzyme]-L-cysteine + S-ubiquitinyl-[E2 ubiquitin-conjugating enzyme]-L-cysteine.. The enzyme catalyses S-ubiquitinyl-[E1 ubiquitin-activating enzyme]-L-cysteine + [acceptor protein]-L-lysine = [E1 ubiquitin-activating enzyme]-L-cysteine + N(6)-monoubiquitinyl-[acceptor protein]-L-lysine.. Its pathway is protein modification; protein ubiquitination. In terms of biological role, accepts ubiquitin from the E1 complex and catalyzes its covalent attachment to other proteins. In vitro catalyzes 'Lys-48'-linked polyubiquitination. Mediates the selective degradation of short-lived and abnormal proteins. Functions in the E6/E6-AP-induced ubiquitination of p53/TP53. Mediates ubiquitination of PEX5 and auto-ubiquitination of STUB1, TRAF6 and TRIM63/MURF1. Ubiquitinates STUB1-associated HSP90AB1 in vitro. Lacks inherent specificity for any particular lysine residue of ubiquitin. Essential for viral activation of IRF3. Mediates polyubiquitination of CYP3A4. The protein is Ubiquitin-conjugating enzyme E2 D1 (UBE2D1) of Bos taurus (Bovine).